Here is a 182-residue protein sequence, read N- to C-terminus: UPF0690 protein C1orf52 (182 aa).

Disordered regions lie at residues 1–67 and 100–182; these read MAAE…RSVT and WKSN…KKKK. Residues 23-32 show a composition bias toward acidic residues; sequence SDEEDNIEPE. Positions 50–63 are enriched in basic and acidic residues; the sequence is NKAEKRLPGPDELF. Thr67 carries the post-translational modification Phosphothreonine. Residue Tyr132 is modified to Phosphotyrosine. Over residues 151–162 the composition is skewed to acidic residues; that stretch reads EGEETLESDDEK. Ser158 is modified (phosphoserine). Basic and acidic residues predominate over residues 172-182; it reads VEPGEPAKKKK.

This sequence belongs to the UPF0690 family. In terms of tissue distribution, expressed in all tissues tested including heart, placenta, liver, skeletal muscle, kidney and pancreas. Weak expression in brain and lung.

The protein is UPF0690 protein C1orf52 (C1orf52) of Homo sapiens (Human).